Reading from the N-terminus, the 369-residue chain is MTQQYAIDTLLAQAGNRSDERTGAVSAPIFLSTAYGHCGIGESTGFDYTRTKNPTRTVLEETIAKLENGDRGFAFSSGMAAIQVLMTLFTAPDEWIVSSDVYGGTYRLLDFSYKNNNSVKPVYVNTASASAIEAAINPNTKAIFIETPSNPLMEECDVVEIAKLAKKHNLMLIVDNTFLTPVLSRPLDLGADVVIHSGTKYIAGHNDALVGLIVAKGQELCDRIAYIQNGAGAVLSPFDSWLTIRGMKTLSLRMKRHQENAQAIAEFLKAQPQVESVLYPNKGGMLSFRLQDEAWVNTFLKSIKLITFAESLGGTESFITYPATQTHMDIPESERVARGITNTLLRFSVGIEDVEDIKADLLQAFANLK.

N6-(pyridoxal phosphate)lysine is present on Lys-200.

It belongs to the trans-sulfuration enzymes family. As to quaternary structure, homotetramer. The cofactor is pyridoxal 5'-phosphate.

It localises to the cytoplasm. The enzyme catalyses O-succinyl-L-homoserine + L-cysteine = L,L-cystathionine + succinate + H(+). Its function is as follows. Catalyzes the formation of L-cystathionine from O-succinyl-L-homoserine (OSHS) and L-cysteine, via a gamma-replacement reaction. In the absence of thiol, catalyzes gamma-elimination to form 2-oxobutanoate, succinate and ammonia. In Haemophilus influenzae (strain ATCC 51907 / DSM 11121 / KW20 / Rd), this protein is Cystathionine gamma-synthase (metB).